The sequence spans 406 residues: Testis-specific Y-encoded-like protein 5 (406 aa).

The segment covering M1 to V25 has biased composition (basic residues). Disordered regions lie at residues M1–L67, I132–A164, and R382–N406. The span at A27 to P38 shows a compositional bias: basic and acidic residues. Positions A49–A62 are enriched in low complexity. Basic and acidic residues predominate over residues R382–G392.

It belongs to the nucleosome assembly protein (NAP) family. In terms of assembly, interacts with USP7.

In terms of biological role, involved in modulation of cell growth and cellular response to gamma radiation probably via regulation of the Akt signaling pathway. Involved in regulation of p53/TP53. Suppresses p53/TP53 protein levels and promotes its ubiquitination; the function is dependent on USP7 and independent on MDM2. Proposed to displace p53/TP53 from interaction with USP7. This Mus musculus (Mouse) protein is Testis-specific Y-encoded-like protein 5 (Tspyl5).